Reading from the N-terminus, the 398-residue chain is 1-deoxy-D-xylulose 5-phosphate reductoisomerase (398 aa).

NADPH is bound by residues T10, G11, S12, I13, G36, K37, N38, and N124. A 1-deoxy-D-xylulose 5-phosphate-binding site is contributed by K125. Residue E126 coordinates NADPH. D150 provides a ligand contact to Mn(2+). S151, E152, S186, and H209 together coordinate 1-deoxy-D-xylulose 5-phosphate. E152 serves as a coordination point for Mn(2+). G215 provides a ligand contact to NADPH. The 1-deoxy-D-xylulose 5-phosphate site is built by S222, N227, K228, and E231. E231 lines the Mn(2+) pocket.

This sequence belongs to the DXR family. As to quaternary structure, homodimer. Mg(2+) is required as a cofactor. The cofactor is Mn(2+).

It carries out the reaction 2-C-methyl-D-erythritol 4-phosphate + NADP(+) = 1-deoxy-D-xylulose 5-phosphate + NADPH + H(+). Its pathway is isoprenoid biosynthesis; isopentenyl diphosphate biosynthesis via DXP pathway; isopentenyl diphosphate from 1-deoxy-D-xylulose 5-phosphate: step 1/6. Functionally, catalyzes the NADPH-dependent rearrangement and reduction of 1-deoxy-D-xylulose-5-phosphate (DXP) to 2-C-methyl-D-erythritol 4-phosphate (MEP). The protein is 1-deoxy-D-xylulose 5-phosphate reductoisomerase of Salmonella choleraesuis (strain SC-B67).